The chain runs to 138 residues: Putative pre-16S rRNA nuclease (138 aa).

Belongs to the YqgF nuclease family.

It localises to the cytoplasm. Functionally, could be a nuclease involved in processing of the 5'-end of pre-16S rRNA. The protein is Putative pre-16S rRNA nuclease of Fusobacterium nucleatum subsp. nucleatum (strain ATCC 25586 / DSM 15643 / BCRC 10681 / CIP 101130 / JCM 8532 / KCTC 2640 / LMG 13131 / VPI 4355).